The following is a 519-amino-acid chain: 3-octaprenyl-4-hydroxybenzoate carboxy-lyase (519 aa).

Asparagine 177 contributes to the Mn(2+) binding site. Prenylated FMN is bound by residues 180–182 (IYR), 194–196 (RWL), and 199–200 (RG). Glutamate 243 is a Mn(2+) binding site. Aspartate 318 acts as the Proton donor in catalysis.

It belongs to the UbiD family. As to quaternary structure, homohexamer. Prenylated FMN serves as cofactor. It depends on Mn(2+) as a cofactor.

It localises to the cell membrane. The catalysed reaction is a 4-hydroxy-3-(all-trans-polyprenyl)benzoate + H(+) = a 2-(all-trans-polyprenyl)phenol + CO2. It functions in the pathway cofactor biosynthesis; ubiquinone biosynthesis. Catalyzes the decarboxylation of 3-octaprenyl-4-hydroxy benzoate to 2-octaprenylphenol, an intermediate step in ubiquinone biosynthesis. The chain is 3-octaprenyl-4-hydroxybenzoate carboxy-lyase from Burkholderia thailandensis (strain ATCC 700388 / DSM 13276 / CCUG 48851 / CIP 106301 / E264).